Here is a 753-residue protein sequence, read N- to C-terminus: 5-methyltetrahydropteroyltriglutamate--homocysteine methyltransferase (753 aa).

5-methyltetrahydropteroyltri-L-glutamate is bound by residues 17–20 and Lys-117; that span reads RELK. Residues 431–433 and Glu-484 contribute to the L-homocysteine site; that span reads IGS. L-methionine is bound by residues 431 to 433 and Glu-484; that span reads IGS. Residues 515–516 and Trp-561 each bind 5-methyltetrahydropteroyltri-L-glutamate; that span reads RC. L-homocysteine is bound at residue Asp-599. Residue Asp-599 participates in L-methionine binding. 5-methyltetrahydropteroyltri-L-glutamate is bound at residue Glu-605. Zn(2+) contacts are provided by His-641, Cys-643, and Glu-665. The active-site Proton donor is His-694. Cys-726 serves as a coordination point for Zn(2+).

Belongs to the vitamin-B12 independent methionine synthase family. Requires Zn(2+) as cofactor.

It catalyses the reaction 5-methyltetrahydropteroyltri-L-glutamate + L-homocysteine = tetrahydropteroyltri-L-glutamate + L-methionine. Its pathway is amino-acid biosynthesis; L-methionine biosynthesis via de novo pathway; L-methionine from L-homocysteine (MetE route): step 1/1. In terms of biological role, catalyzes the transfer of a methyl group from 5-methyltetrahydrofolate to homocysteine resulting in methionine formation. The chain is 5-methyltetrahydropteroyltriglutamate--homocysteine methyltransferase from Escherichia coli O8 (strain IAI1).